We begin with the raw amino-acid sequence, 249 residues long: Short-chain dehydrogenase virB (249 aa).

NADP(+) contacts are provided by Ile16, Arg104, Tyr150, Lys154, Val183, and Thr185. Residue Tyr150 is the Proton donor of the active site. Catalysis depends on Lys154, which acts as the Lowers pKa of active site Tyr.

Belongs to the short-chain dehydrogenases/reductases (SDR) family.

It participates in secondary metabolite biosynthesis. Functionally, short-chain dehydrogenase; part of the gene cluster that mediates the biosynthesis of virensols and trichoxide, fungal natural products that contain or are derived from a salicylaldehyde core. The pathway begins with the synthesis of the reduced chain in virensol C by the highly reducing polyketide synthase virA via condensation of one acetate and 8 malonate units. VirA has interesting programming rules since the first 2 ketides are fully reduced, the 3 following ketides undergo beta-dehydration, and the last 3 ketides are only reduced to beta-hydroxys to yield the trihydroxy portion. The production of aldehyde virensol C by virA alone is surprising, since virA does not contain a reductase (R) domain that is typically associated with reductive product release in HRPKS. The cupin-domain enzyme virC is involved in enhancing virA product turnover. The short-chain dehydrogenase virB then oxidizes the C-7 alcohol of virensol C to a ketone, yielding virensol D. Virensol D is further transformed to salicylaldehyde 5-deoxyaurocitrin by the short-chain dehydrogenase virD. VirD catalyzes the dehydrogenation of C-3 to form the beta-ketone aldehyde, which is followed by the generation of the nucleophilic C-2 that is required for the intramolecular aldol condensation between C-2 and C-7, itself followed by dehydration and aromatization which leads to salicylaldehyde 5-deoxyaurocitrin. While the dehydrogenation of virensol D is definitely catalyzed by virD, the aldol condensation and dehydration may be uncatalyzed or assisted by virD. The short chain dehydrogenase virG then converts salicylaldehyde 5-deoxyaurocitrin into virensol B which is further hydroxylated by the cytochrome P450 monooxygenase virE to yield the hydroquinone virensol A. VirI then may oxidize virensol A to form the quinone, while virH performs the epoxidation. Finally, the two remaining short-chain dehydrogenases, virK and virL, are probably responsible for reducing the ketones to the corresponding alcohols to furnish the epoxycyclohexanol structure in trichoxide. In Hypocrea virens (strain Gv29-8 / FGSC 10586) (Gliocladium virens), this protein is Short-chain dehydrogenase virB.